The sequence spans 47 residues: Snake venom metalloproteinase jararafibrase-4 (47 aa).

Residues Arg6–Leu47 form the Peptidase M12B domain. A Ca(2+)-binding site is contributed by Glu9.

This sequence belongs to the venom metalloproteinase (M12B) family. In terms of assembly, monomer. The cofactor is Zn(2+). Expressed by the venom gland.

The protein resides in the secreted. With respect to regulation, inhibited by 1,10-phenanthroline and EDTA. In terms of biological role, the metalloproteinase is a probable venom zinc protease that induces local hemorrhage in the skin of rats. Degrades type-IV collagen, gelatin, laminin and fibronectin. Has fibrinolytic activities. Has high hemagglutinating activity on red blood cells. Cleaves insulin B chain at 29-His-|-Leu-30, and 38-Ala-|-Leu-39 bonds. This chain is Snake venom metalloproteinase jararafibrase-4, found in Bothrops jararaca (Jararaca).